The chain runs to 71 residues: Small ribosomal subunit protein bS21 (71 aa).

It belongs to the bacterial ribosomal protein bS21 family.

In Shewanella amazonensis (strain ATCC BAA-1098 / SB2B), this protein is Small ribosomal subunit protein bS21.